A 303-amino-acid polypeptide reads, in one-letter code: 2-dehydropantoate 2-reductase (303 aa).

Residues 7-12 (GCGALG), Asn-98, and Ala-122 each bind NADP(+). A substrate-binding site is contributed by Asn-98. Catalysis depends on Lys-176, which acts as the Proton donor. Substrate-binding residues include Asn-180, Asn-184, Asn-194, and Ser-244. Glu-256 serves as a coordination point for NADP(+).

This sequence belongs to the ketopantoate reductase family. As to quaternary structure, monomer.

The protein resides in the cytoplasm. It catalyses the reaction (R)-pantoate + NADP(+) = 2-dehydropantoate + NADPH + H(+). It participates in cofactor biosynthesis; (R)-pantothenate biosynthesis; (R)-pantoate from 3-methyl-2-oxobutanoate: step 2/2. Functionally, catalyzes the NADPH-dependent reduction of ketopantoate into pantoic acid. This Salmonella typhi protein is 2-dehydropantoate 2-reductase (panE).